The primary structure comprises 191 residues: Pyridoxal 5'-phosphate synthase subunit PdxT (191 aa).

Residue 46–48 (GES) coordinates L-glutamine. The active-site Nucleophile is the cysteine 78. Residues arginine 105 and 133 to 134 (IR) each bind L-glutamine. Catalysis depends on charge relay system residues histidine 169 and glutamate 171.

This sequence belongs to the glutaminase PdxT/SNO family. In the presence of PdxS, forms a dodecamer of heterodimers. Only shows activity in the heterodimer.

The enzyme catalyses aldehydo-D-ribose 5-phosphate + D-glyceraldehyde 3-phosphate + L-glutamine = pyridoxal 5'-phosphate + L-glutamate + phosphate + 3 H2O + H(+). The catalysed reaction is L-glutamine + H2O = L-glutamate + NH4(+). The protein operates within cofactor biosynthesis; pyridoxal 5'-phosphate biosynthesis. Catalyzes the hydrolysis of glutamine to glutamate and ammonia as part of the biosynthesis of pyridoxal 5'-phosphate. The resulting ammonia molecule is channeled to the active site of PdxS. The chain is Pyridoxal 5'-phosphate synthase subunit PdxT from Fervidobacterium nodosum (strain ATCC 35602 / DSM 5306 / Rt17-B1).